Consider the following 1191-residue polypeptide: MPALWLSCCLGVALLLPAAQATSRREVCDCNGKSRQCVFDQELHRQTGSGFRCLNCNDNTAGVHCERCREGFYRHRDRDRCLPCNCHSKGSLSAGCDNSGQCRCKPGVTGQRCDRCQPGFHMLTDAGCTRDQGQLDSKCDCDPAGISGPCDSGRCVCKPAVTGERCDRCRPGYYHLDRANPEGCTQCFCYGHSASCHASADFSVHKITSTFSQDVDGWKAVQRNGAPAKLHWSQRHRDVFSSARRSDPVYFVAPAKFLGNQQVSYGQSLSFDYRVDRGGRQPSAYDVILEGAGLQIRAPLMAPGKTLPCGITKTYTFRLNEHPSSHWSPQLSYFEYRRLLRNLTALLIRATYGEYSTGYIDNVTLVSARPVSGAPAPWVERCVCPAGYKGQFCQECASGYKRDSARLGPFGACVPCNCQGGGACDPDTGDCYSGDENPDIECADCPIGFYNDPHDPRSCKPCPCHNGFSCSVMPETEEVVCNNCPPGVTGARCELCADGFFGDPFGERGPVRPCQRCQCNNNVDPNASGNCDQLTGRCLKCIYNTAGVYCDQCKAGYFGDPLAPNPADKCRACNCSPMGSEPGECRGDGSCVCKPGFGGLNCDHAALTSCPACYNQVKIQMDQFTQQLQSLEALVSKAQGGGGGGTVPVQLEGRIEQAEQALQDILGEAQISEGAMRAVAVRLAKARSQENDYKTRLDDLKMTAERIRALGSQHQNRVQDTSRLISQMRLSLAGSEALLENTNIHSSEHYVGPNDFKSLAQEATRKADSHAESANAMKQLARETEDYSKQALSLARKLLSGGGGSGSWDSSVVQGLMGKLEKTKSLSQQLSLEGTQADIEADRSYQHSLRLLDSASQLQGVSDLSFQVEAKRIRQKADSLSNLVTRQTDAFTRVRNNLGNWEKETRQLLQTGKDRRQTSDQLLSRANLAKNRAQEALSMGNATFYEVENILKNLREFDLQVEDRKAEAEEAMKRLSSISQKVADASDKTQQAETALGSATADTQRAKNAAREALEISSEIELEIGSLNLEANVTADGALAMEKGTATLKSEMREMIELARKELEFDTDKDTVQLVITEAQQADARATSAGVTIQDTLNTLDGILHLIDQPGSVDEEGMMLLEQGLFQAKTQINSRLRPLMSDLEERVRRQRNHLHLLETSIDGILADVKNLENIRDNLPPGCYNTQALEQQ.

Residues 1 to 21 (MPALWLSCCLGVALLLPAAQA) form the signal peptide. Intrachain disulfides connect Cys28-Cys37, Cys30-Cys53, Cys56-Cys65, Cys68-Cys81, Cys84-Cys96, Cys86-Cys102, Cys104-Cys113, Cys116-Cys128, Cys139-Cys150, Cys141-Cys155, Cys157-Cys166, and Cys169-Cys184. Laminin EGF-like domains follow at residues 28–83 (CDCN…RCLP), 84–130 (CNCH…GCTR), and 139–186 (CDCD…GCTQ). The 10-residue stretch at 187-196 (CFCYGHSASC) folds into the Laminin EGF-like 4; first part domain. The Laminin IV type A domain occupies 213–381 (QDVDGWKAVQ…SGAPAPWVER (169 aa)). N-linked (GlcNAc...) asparagine glycosylation is found at Asn342 and Asn362. The Laminin EGF-like 4; second part domain maps to 382–415 (CVCPAGYKGQFCQECASGYKRDSARLGPFGACVP). 3 consecutive Laminin EGF-like domains span residues 416 to 461 (CNCQ…SCKP), 462 to 516 (CPCH…PCQR), and 517 to 572 (CQCN…KCRA). Disulfide bonds link Cys462/Cys470, Cys464/Cys481, Cys484/Cys493, Cys496/Cys514, Cys517/Cys531, Cys519/Cys538, Cys541/Cys550, Cys553/Cys570, Cys573/Cys585, Cys575/Cys591, and Cys593/Cys602. Asn526 carries an N-linked (GlcNAc...) asparagine glycan. One can recognise a Laminin EGF-like 8; truncated domain in the interval 573–602 (CNCSPMGSEPGECRGDGSCVCKPGFGGLNC). Residues 586-588 (RGD) carry the Cell attachment site motif. The tract at residues 603–1191 (DHAALTSCPA…CYNTQALEQQ (589 aa)) is domain II and I. 2 coiled-coil regions span residues 612 to 710 (ACYN…IRAL) and 759 to 786 (LAQE…ETED). A glycan (O-linked (Xyl...) (chondroitin sulfate) serine) is linked at Ser805. N-linked (GlcNAc...) asparagine glycosylation occurs at Asn941. Positions 946–996 (EVENILKNLREFDLQVEDRKAEAEEAMKRLSSISQKVADASDKTQQAETAL) form a coiled coil. Asn1032 carries an N-linked (GlcNAc...) asparagine glycan. Residues 1139 to 1178 (LMSDLEERVRRQRNHLHLLETSIDGILADVKNLENIRDNL) are a coiled coil.

As to quaternary structure, laminin is a complex glycoprotein, consisting of three different polypeptide chains (alpha, beta, gamma), which are bound to each other by disulfide bonds into a cross-shaped molecule comprising one long and three short arms with globules at each end. Gamma-2 is a subunit of laminin-5 (laminin-332 or epiligrin/kalinin/nicein). Binds to fibulin-1, fibulin-1c, fibulin-2 and nidogen. O-glycosylated; contains chondroitin sulfate (CS). In terms of tissue distribution, epithelial cells of many tissues, particularly high levels in tongue, hair follicles and kidney. Basement membranes of the collecting tubules of kidney and pancreas.

It localises to the secreted. Its subcellular location is the extracellular space. The protein resides in the extracellular matrix. It is found in the basement membrane. Functionally, binding to cells via a high affinity receptor, laminin is thought to mediate the attachment, migration and organization of cells into tissues during embryonic development by interacting with other extracellular matrix components. This Mus musculus (Mouse) protein is Laminin subunit gamma-2 (Lamc2).